We begin with the raw amino-acid sequence, 29 residues long: SAIACGESCVYIPCFIPGCSCRNRVCYLN.

Residues 1–29 (SAIACGESCVYIPCFIPGCSCRNRVCYLN) constitute a cross-link (cyclopeptide (Ser-Asn)). Cystine bridges form between Cys-5–Cys-19, Cys-9–Cys-21, and Cys-14–Cys-26.

In terms of processing, this is a cyclic peptide.

Its function is as follows. Probably participates in a plant defense mechanism. The sequence is that of Cycloviolacin-H2 from Viola hederacea (Australian violet).